The sequence spans 401 residues: Chalcone synthase 6 (401 aa).

Cysteine 168 is an active-site residue.

Belongs to the thiolase-like superfamily. Chalcone/stilbene synthases family.

It carries out the reaction (E)-4-coumaroyl-CoA + 3 malonyl-CoA + 3 H(+) = 2',4,4',6'-tetrahydroxychalcone + 3 CO2 + 4 CoA. Its pathway is secondary metabolite biosynthesis; flavonoid biosynthesis. Functionally, the primary product of this enzyme is 4,2',4',6'-tetrahydroxychalcone (also termed naringenin-chalcone or chalcone) which can under specific conditions spontaneously isomerize into naringenin. This chain is Chalcone synthase 6 (CHS6), found in Sorghum bicolor (Sorghum).